A 208-amino-acid polypeptide reads, in one-letter code: Guanylate kinase (208 aa).

The 180-residue stretch at 5–184 (GLLIVFSGPS…AAERVKCVIE (180 aa)) folds into the Guanylate kinase-like domain. Residue 12–19 (GPSGVGKG) coordinates ATP.

The protein belongs to the guanylate kinase family.

It is found in the cytoplasm. It catalyses the reaction GMP + ATP = GDP + ADP. Essential for recycling GMP and indirectly, cGMP. This is Guanylate kinase from Streptococcus pneumoniae (strain ATCC BAA-255 / R6).